We begin with the raw amino-acid sequence, 290 residues long: Acetylglutamate kinase (290 aa).

Residues 60-61 (GG), Arg-82, and Asn-187 contribute to the substrate site.

It belongs to the acetylglutamate kinase family. ArgB subfamily.

Its subcellular location is the cytoplasm. The enzyme catalyses N-acetyl-L-glutamate + ATP = N-acetyl-L-glutamyl 5-phosphate + ADP. It participates in amino-acid biosynthesis; L-arginine biosynthesis; N(2)-acetyl-L-ornithine from L-glutamate: step 2/4. Catalyzes the ATP-dependent phosphorylation of N-acetyl-L-glutamate. The protein is Acetylglutamate kinase of Marinobacter nauticus (strain ATCC 700491 / DSM 11845 / VT8) (Marinobacter aquaeolei).